The following is a 198-amino-acid chain: Recombination protein RecR (198 aa).

Residues 57–72 (CSSCGHITDKDPCYIC) form a C4-type zinc finger. One can recognise a Toprim domain in the interval 80–175 (SIICVVQDPK…KITRIAHGLP (96 aa)).

Belongs to the RecR family.

Its function is as follows. May play a role in DNA repair. It seems to be involved in an RecBC-independent recombinational process of DNA repair. It may act with RecF and RecO. This is Recombination protein RecR from Anoxybacillus flavithermus (strain DSM 21510 / WK1).